Here is a 596-residue protein sequence, read N- to C-terminus: Leucine zipper putative tumor suppressor 1 (596 aa).

Gly-2 carries N-myristoyl glycine lipidation. 2 disordered regions span residues Ala-136 to Leu-193 and Tyr-295 to Ser-324. The span at Pro-153 to Leu-162 shows a compositional bias: basic and acidic residues. Low complexity predominate over residues Ser-178–Ser-190. Residues Ile-256 to Gly-374 adopt a coiled-coil conformation. The span at Tyr-295–Glu-310 shows a compositional bias: basic and acidic residues.

This sequence belongs to the LZTS family. In terms of assembly, binds EEF1G, TLK2 and CDK1. In terms of processing, phosphorylated on serine residues. Hyperphosphorylated by the cAMP-dependent kinase PKA during cell-cycle progression. Highly expressed in testis, prostate, spleen, thymus, ovary and brain. Detected at lower levels in heart, placenta, small intestine, colon, liver, kidney, skeletal muscle and pancreas. Not detectable in primary tumors from breast and prostate and in many cancer cell lines.

Its subcellular location is the cytoplasm. The protein resides in the cell membrane. It is found in the cell projection. It localises to the dendritic spine. The protein localises to the postsynaptic density. Its subcellular location is the synapse. In terms of biological role, involved in the regulation of cell growth. May stabilize the active CDC2-cyclin B1 complex and thereby contribute to the regulation of the cell cycle and the prevention of uncontrolled cell proliferation. May act as a tumor suppressor. The sequence is that of Leucine zipper putative tumor suppressor 1 (LZTS1) from Homo sapiens (Human).